Here is a 592-residue protein sequence, read N- to C-terminus: Peroxisomal targeting signal receptor (592 aa).

Residue Cys10 forms a Glycyl cysteine thioester (Cys-Gly) (interchain with G-Cter in ubiquitin) linkage. Residues Ser11–Gln33 form an amphipathic helix 1 (AH1) region. Residue Lys22 forms a Glycyl lysine isopeptide (Lys-Gly) (interchain with G-Cter in ubiquitin) linkage. Residues Lys22–Gly46 are compositionally biased toward polar residues. Residues Lys22 to Lys49 are disordered. The segment at Arg58–Phe76 is amphipathic helix 2 (AH2). Short sequence motifs (wxxxF/Y motif) lie at residues Trp100–Phe104, Trp128–Phe132, and Trp185–Phe189. The amphipathic helix 4 (AH4) stretch occupies residues Phe223–Phe239. A WxxxF/Y motif 4 motif is present at residues Trp262–Phe266. 5 TPR repeats span residues Asp295–His329, Val330–Asn363, Ala440–Asp473, Ile475–Phe507, and Arg509–Glu541.

Belongs to the peroxisomal targeting signal receptor family. As to quaternary structure, interacts (via WxxxF/Y and LVxEF motifs) with PEX14; promoting translocation through the PEX13-PEX14 docking complex. Monoubiquitinated at Cys-10 by PEX2 during PEX5 passage through the retrotranslocation channel: monoubiquitination acts as a signal for PEX5 extraction and is required for proper export from peroxisomes and recycling. When PEX5 recycling is compromised, polyubiquitinated at Lys-22 by PEX10 during its passage through the retrotranslocation channel, leading to its degradation.

It is found in the cytoplasm. The protein localises to the cytosol. It localises to the peroxisome matrix. In terms of biological role, receptor that mediates peroxisomal import of proteins containing a C-terminal PTS1-type tripeptide peroxisomal targeting signal (SKL-type). Binds to cargo proteins containing a PTS1 peroxisomal targeting signal in the cytosol, and translocates them into the peroxisome matrix by passing through the PEX13-PEX14 docking complex along with cargo proteins. PEX5 receptor is then retrotranslocated into the cytosol, leading to release of bound cargo in the peroxisome matrix, and reset for a subsequent peroxisome import cycle. The chain is Peroxisomal targeting signal receptor (PEX5) from Candida albicans (strain SC5314 / ATCC MYA-2876) (Yeast).